The following is a 201-amino-acid chain: ATP-dependent Clp protease proteolytic subunit (201 aa).

Serine 101 serves as the catalytic Nucleophile. Residue histidine 126 is part of the active site.

This sequence belongs to the peptidase S14 family. In terms of assembly, component of the chloroplastic Clp protease core complex.

The protein resides in the plastid. Its subcellular location is the chloroplast stroma. It catalyses the reaction Hydrolysis of proteins to small peptides in the presence of ATP and magnesium. alpha-casein is the usual test substrate. In the absence of ATP, only oligopeptides shorter than five residues are hydrolyzed (such as succinyl-Leu-Tyr-|-NHMec, and Leu-Tyr-Leu-|-Tyr-Trp, in which cleavage of the -Tyr-|-Leu- and -Tyr-|-Trp bonds also occurs).. Cleaves peptides in various proteins in a process that requires ATP hydrolysis. Has a chymotrypsin-like activity. Plays a major role in the degradation of misfolded proteins. The chain is ATP-dependent Clp protease proteolytic subunit from Staurastrum punctulatum (Green alga).